A 105-amino-acid polypeptide reads, in one-letter code: Large ribosomal subunit protein eL30 (105 aa).

It belongs to the eukaryotic ribosomal protein eL30 family.

The protein is Large ribosomal subunit protein eL30 (rpl30e) of Methanococcus vannielii (strain ATCC 35089 / DSM 1224 / JCM 13029 / OCM 148 / SB).